A 119-amino-acid chain; its full sequence is RNA guanine-N7 methyltransferase activating subunit (119 aa).

The segment at 1–55 is interaction with RNMT; it reads MSDTSEEIPNFEEMFASRFTKDDKEYQEYLKRPPESPPIVEEWNSRAGGNQRNRG. The disordered stretch occupies residues 30 to 119; it reads LKRPPESPPI…HNQRPPYGYY (90 aa). Residue Ser36 is modified to Phosphoserine. Residues 36–42 carry the RNMT-activating domain motif; it reads SPPIVEE. A compositionally biased stretch (polar residues) spans 47 to 61; it reads AGGNQRNRGNWLQDN. The RNA-binding stretch occupies residues 56–119; the sequence is NWLQDNRQFR…HNQRPPYGYY (64 aa). Basic and acidic residues predominate over residues 62 to 73; it reads RQFRGRDNRRGW. Omega-N-methylarginine is present on Arg85. Ser86 is modified (phosphoserine). Low complexity predominate over residues 89 to 112; that stretch reads NNNYPQQRPEPYYQQQYTQYGHNQ.

It belongs to the RAM family. Interacts with RNMT; this interaction enhances mRNA binding and cap methyltransferase activity.

It localises to the nucleus. Regulatory subunit of the mRNA-capping methyltransferase RNMT:RAMAC complex that methylates the N7 position of the added guanosine to the 5'-cap structure of mRNAs. Promotes the recruitment of the methyl donor, S-adenosyl-L-methionine, to RNMT. Regulates RNMT expression by a post-transcriptional stabilizing mechanism. Binds RNA. In Mus musculus (Mouse), this protein is RNA guanine-N7 methyltransferase activating subunit (Ramac).